The chain runs to 21 residues: Thanatin (21 aa).

Cysteine 11 and cysteine 18 form a disulfide bridge.

Its subcellular location is the secreted. Its function is as follows. Insect defense peptide with a broad spectrum of activity against Gram-positive and Gram-negative bacteria and fungi. No activity against S.aureus. Stops respiration in bacteria but does not permeabilize their inner membranes. The sequence is that of Thanatin from Podisus maculiventris (Spined soldier bug).